Here is a 1064-residue protein sequence, read N- to C-terminus: Lysine-specific demethylase 4A (1064 aa).

Residue alanine 2 is modified to N-acetylalanine. The JmjN domain occupies 14 to 56 (IMTFYPTMEEFRNFSRYIAYIESQGAHRAGLAKVVPPKEWKPR). Tyrosine 132 contributes to the 2-oxoglutarate binding site. Positions 142–308 (EKHVDEWNIG…YGKQAVLCSC (167 aa)) constitute a JmjC domain. Residues histidine 188 and glutamate 190 each contribute to the Fe cation site. Asparagine 198 and lysine 206 together coordinate 2-oxoglutarate. Zn(2+)-binding residues include cysteine 234 and histidine 240. Lysine 241 is a 2-oxoglutarate binding site. Histidine 276 provides a ligand contact to Fe cation. Zn(2+) is bound by residues cysteine 306 and cysteine 308. 3 disordered regions span residues 358–384 (ELPP…EEGD), 501–537 (FSGS…RAQG), and 616–642 (SDDE…PLSQ). Over residues 366-382 (EEECPEDDMEGVEDGEE) the composition is skewed to acidic residues. Residues 509 to 532 (SSSLGSGSSRDSVSSDSETSEPLS) show a composition bias toward low complexity. Serine 523 carries the post-translational modification Phosphoserine. An interaction with NCOR1 region spans residues 597 to 638 (RQPLSKLPRHHPLVLQECVSDDETSEQLTPEEEAEETEAWAK). The span at 616–634 (SDDETSEQLTPEEEAEETE) shows a compositional bias: acidic residues. The PHD-type 1 zinc finger occupies 709-767 (MCFTSTGCGTDINLSTPYLEEDGTSILVSCKKCSVRVHASCYGVPPAKASEDWMCSRCS). The C2HC pre-PHD-type zinc-finger motif lies at 772 to 805 (EEDCCLCSLRGGALQRANDDRWVHVSCAVAILEA). Residues 828-885 (LKCIFCKKRRKRTAGCCVQCSHGRCPTAFHVSCAQAAGVMMQPDDWPFVVFITCFRHK) form a PHD-type 2 zinc finger. 2 Tudor domains span residues 897-954 (QSIT…CLQF) and 955-1011 (GPPA…EELP).

The protein belongs to the JHDM3 histone demethylase family. Interacts with histone deacetylase proteins HDAC1, HDAC2 and HDAC3. Interacts with RB and NCOR1. Interacts with VRK1. Requires Fe(2+) as cofactor. In terms of processing, ubiquitinated by RNF8 and RNF168, leading to its degradation. Degradation promotes accessibility of H4K20me2 mark for DNA repair protein TP53BP1, which is then recruited. Also ubiquitinated by the SCF(FBXO22) complex; leading to proteasomal degradation.

The protein localises to the nucleus. It carries out the reaction N(6),N(6),N(6)-trimethyl-L-lysyl(9)-[histone H3] + 2 2-oxoglutarate + 2 O2 = N(6)-methyl-L-lysyl(9)-[histone H3] + 2 formaldehyde + 2 succinate + 2 CO2. The catalysed reaction is N(6),N(6),N(6)-trimethyl-L-lysyl(36)-[histone H3] + 2 2-oxoglutarate + 2 O2 = N(6)-methyl-L-lysyl(36)-[histone H3] + 2 formaldehyde + 2 succinate + 2 CO2. Histone demethylase that specifically demethylates 'Lys-9' and 'Lys-36' residues of histone H3, thereby playing a central role in histone code. Does not demethylate histone H3 'Lys-4', H3 'Lys-27' nor H4 'Lys-20'. Demethylates trimethylated H3 'Lys-9' and H3 'Lys-36' residue, while it has no activity on mono- and dimethylated residues. Demethylation of Lys residue generates formaldehyde and succinate. Participates in transcriptional repression of ASCL2 and E2F-responsive promoters via the recruitment of histone deacetylases and NCOR1, respectively. This chain is Lysine-specific demethylase 4A (KDM4A), found in Pongo abelii (Sumatran orangutan).